A 1421-amino-acid chain; its full sequence is Envelopment polyprotein (1421 aa).

The signal sequence occupies residues 1–20 (MEGSYWWLSLLALLAWGANG). At 21–479 (ESTSPAETSP…CRMSHRPRTC (459 aa)) the chain is on the lumenal side. Over residues 22-31 (STSPAETSPA) the composition is skewed to low complexity. The segment at 22–42 (STSPAETSPAPTTPNPPVVNP) is disordered. N-linked (GlcNAc...) asparagine; by host glycans are attached at residues asparagine 97 and asparagine 346. The chain crosses the membrane as a helical span at residues 480–500 (LALFIWLGAGYGITCIAGYMV). The Cytoplasmic segment spans residues 501–610 (YYAILALSML…KLGTLLKRLS (110 aa)). The chain crosses the membrane as a helical span at residues 611 to 631 (WVTVFLCLFLTAIAPVQGQVT). Residues 632 to 643 (TSPVLPSNQSTE) are Lumenal-facing. The N-linked (GlcNAc...) asparagine; by host glycan is linked to asparagine 639. Residues 644-664 (CTLLPPPVFLIFSAVLMSKTL) form a helical membrane-spanning segment. Residues 665 to 708 (KRMGPVNKVGAAGHSARRTNSPKNLYKSKQIANTKSGPREPRRR) lie on the Cytoplasmic side of the membrane. Residues 709–729 (VVVKALLILTASSALQSIHLA) form a helical membrane-spanning segment. The propeptide occupies 722–776 (ALQSIHLAQAFDSGSLPEGAWEEEMQLVQGCNQECSLEEDECSCPDGQSMTRKLL). The Lumenal segment spans residues 730–1330 (QAFDSGSLPE…GSFFRNYLGS (601 aa)). 2 disulfide bridges follow: cysteine 901–cysteine 1096 and cysteine 929–cysteine 934. 2 N-linked (GlcNAc...) asparagine; by host glycosylation sites follow: asparagine 1081 and asparagine 1299. A helical transmembrane segment spans residues 1331–1351 (ITLGIVLTLLPVAVVLLFFCY). Over 1352–1421 (GDKLFKLCSC…GKGKNYKELV (70 aa)) the chain is Cytoplasmic.

It belongs to the nairovirus envelope glycoprotein family. As to quaternary structure, heterodimer with glycoprotein C; in prefusion state. Heterodimer with glycoprotein N; in prefusion state. Homotrimeric; in postfusion state. In terms of processing, specific enzymatic cleavage by host MBTPS1/S1P/SKI-1 endopeptidase yield glycoprotein N. Specific enzymatic cleavages by host furin-like protease and MBTPS1/S1P endopeptidase yield GP38. Glycosylated.

The protein localises to the host endoplasmic reticulum membrane. It is found in the virion membrane. The protein resides in the host Golgi apparatus membrane. Functionally, glycoprotein N and glycoprotein C interact with each other and are present at the surface of the virion. Glycoprotein N probably locks the Gn-Gc complex in a prefusion state. Glycoprotein N and glycoprotein C are able to attach the virion to host cell receptors. This attachment induces virion internalization predominantly through clathrin-dependent endocytosis. Its function is as follows. Glycoprotein C and glycoprotein N interact with each other and are present at the surface of the virion. The spikes at the surface of the virion are formed by an N-terminal extension of glycoprotein C. Glycoprotein N and glycoprotein C are able to attach the virion to host cell receptors. This attachment induces virion internalization predominantly through clathrin-dependent endocytosis. Class II fusion protein that promotes fusion of viral membrane with host endosomal membrane after endocytosis of the virion. Exposure to potassium is necessary for the conformational change leading to fusion. This chain is Envelopment polyprotein (GP), found in Ixodes.